The following is a 212-amino-acid chain: MISGLKGTLKKLEVGYAHIETGGITYEVTISFKTYLELKSLPSHNEVQFQIFHAMNERGQKLFGFLTEQDKEFFKVIKGLQGIGELTALKILSFFSAEELYRIAQSGEAKELEKIPKVKGKTSEKIFFEVKQNLKKLELFLSGTSKEPSISLSSFSETPEEAALSRKREIAILGLVQLGFEEKTASKEVDKILKSSSPTDPGEIIREILKSL.

The domain I stretch occupies residues 1–66 (MISGLKGTLK…ERGQKLFGFL (66 aa)). A domain II region spans residues 67–145 (TEQDKEFFKV…KLELFLSGTS (79 aa)). The interval 146 to 162 (KEPSISLSSFSETPEEA) is flexible linker. Residues 163 to 212 (ALSRKREIAILGLVQLGFEEKTASKEVDKILKSSSPTDPGEIIREILKSL) form a domain III region.

Belongs to the RuvA family. Homotetramer. Forms an RuvA(8)-RuvB(12)-Holliday junction (HJ) complex. HJ DNA is sandwiched between 2 RuvA tetramers; dsDNA enters through RuvA and exits via RuvB. An RuvB hexamer assembles on each DNA strand where it exits the tetramer. Each RuvB hexamer is contacted by two RuvA subunits (via domain III) on 2 adjacent RuvB subunits; this complex drives branch migration. In the full resolvosome a probable DNA-RuvA(4)-RuvB(12)-RuvC(2) complex forms which resolves the HJ.

It is found in the cytoplasm. The RuvA-RuvB-RuvC complex processes Holliday junction (HJ) DNA during genetic recombination and DNA repair, while the RuvA-RuvB complex plays an important role in the rescue of blocked DNA replication forks via replication fork reversal (RFR). RuvA specifically binds to HJ cruciform DNA, conferring on it an open structure. The RuvB hexamer acts as an ATP-dependent pump, pulling dsDNA into and through the RuvAB complex. HJ branch migration allows RuvC to scan DNA until it finds its consensus sequence, where it cleaves and resolves the cruciform DNA. The polypeptide is Holliday junction branch migration complex subunit RuvA (Leptospira borgpetersenii serovar Hardjo-bovis (strain JB197)).